The sequence spans 175 residues: 6,7-dimethyl-8-ribityllumazine synthase (175 aa).

5-amino-6-(D-ribitylamino)uracil contacts are provided by residues F24, 58–60 (ALE), and 82–84 (AVI). 87–88 (ET) is a binding site for (2S)-2-hydroxy-3-oxobutyl phosphate. H90 acts as the Proton donor in catalysis. N115 is a binding site for 5-amino-6-(D-ribitylamino)uracil. R129 provides a ligand contact to (2S)-2-hydroxy-3-oxobutyl phosphate. A disordered region spans residues 151-175 (LEPEEDDEDEDEEDEDFDDEETDRR). A compositionally biased stretch (acidic residues) spans 152–175 (EPEEDDEDEDEEDEDFDDEETDRR).

It belongs to the DMRL synthase family.

The catalysed reaction is (2S)-2-hydroxy-3-oxobutyl phosphate + 5-amino-6-(D-ribitylamino)uracil = 6,7-dimethyl-8-(1-D-ribityl)lumazine + phosphate + 2 H2O + H(+). It participates in cofactor biosynthesis; riboflavin biosynthesis; riboflavin from 2-hydroxy-3-oxobutyl phosphate and 5-amino-6-(D-ribitylamino)uracil: step 1/2. Catalyzes the formation of 6,7-dimethyl-8-ribityllumazine by condensation of 5-amino-6-(D-ribitylamino)uracil with 3,4-dihydroxy-2-butanone 4-phosphate. This is the penultimate step in the biosynthesis of riboflavin. This Bordetella petrii (strain ATCC BAA-461 / DSM 12804 / CCUG 43448) protein is 6,7-dimethyl-8-ribityllumazine synthase.